We begin with the raw amino-acid sequence, 241 residues long: MWMHKKILLKLSGESLKGESSYGIDPRTIKKIAWEIKEIKDLGVKIAIIVGAGNLWRGRTGEELGMDRSQADYMGMLGTIMNSLALQDALEQTNTITRVMTAFPVSSVAEPYIRRKAIRHLEKDRVVILGAGAGSPYFSTDTAAALRAAELNIDVILMAKNNIEGVYNKDPKKHQDAVLIKHMKHQQILSQRLAVMDITAASLCLENNIDILVFNMLKKGNIKKVVLKEGNIGTVISSKGE.

Residues 10 to 13 (KLSG), G53, and R57 each bind ATP. UMP is bound by residues D72 and 133-140 (AGSPYFST). The ATP site is built by N161, Y167, and D170.

The protein belongs to the UMP kinase family. In terms of assembly, homohexamer.

It is found in the cytoplasm. The catalysed reaction is UMP + ATP = UDP + ADP. The protein operates within pyrimidine metabolism; CTP biosynthesis via de novo pathway; UDP from UMP (UMPK route): step 1/1. Its activity is regulated as follows. Inhibited by UTP. Catalyzes the reversible phosphorylation of UMP to UDP. The protein is Uridylate kinase of Onion yellows phytoplasma (strain OY-M).